The primary structure comprises 78 residues: Large ribosomal subunit protein eL20 (78 aa).

This sequence belongs to the eukaryotic ribosomal protein eL20 family. In terms of assembly, part of the 50S ribosomal subunit. Binds 23S rRNA.

The polypeptide is Large ribosomal subunit protein eL20 (Pyrobaculum arsenaticum (strain DSM 13514 / JCM 11321 / PZ6)).